The chain runs to 295 residues: Manganese transport system membrane protein MntD (295 aa).

Helical transmembrane passes span 7-27, 42-62, 63-83, 87-107, 138-158, 174-194, 203-223, 227-247, and 253-273; these read IIATGVLVGVSCGLIGTFLVL, LLGIVGAFLVTGSLDGIYMFI, GAAATGLLTAFLVQLLHSKGV, AAIGVVFTSLFAIGVILLSVY, IGPKAFWMLASVLVLNVVLIS, ALALGIPVLLIHYVQMGMLSL, VGAVLVVAMLIVPPAAAHLLT, LYMLILSALIGGLSAVMGYFF, and VSISGAMAAMTGVCYASAFLF.

Belongs to the ABC-3 integral membrane protein family. As to quaternary structure, the complex is probably composed of two ATP-binding proteins (MntB), two transmembrane proteins (MntC and MntD) and a solute-binding protein (MntA).

The protein localises to the cell membrane. Functionally, probably part of the ABC transporter complex MntABCD involved in manganese import. Probably responsible for the translocation of the substrate across the membrane. This is Manganese transport system membrane protein MntD from Bacillus subtilis (strain 168).